We begin with the raw amino-acid sequence, 358 residues long: 3-isopropylmalate dehydrogenase (358 aa).

Residues R92, R102, R130, and D224 each contribute to the substrate site. 3 residues coordinate Mg(2+): D224, D248, and D252. 282–294 (GSAPDIAGQGIAN) lines the NAD(+) pocket.

This sequence belongs to the isocitrate and isopropylmalate dehydrogenases family. LeuB type 1 subfamily. Homodimer. Requires Mg(2+) as cofactor. It depends on Mn(2+) as a cofactor.

It localises to the cytoplasm. The enzyme catalyses (2R,3S)-3-isopropylmalate + NAD(+) = 4-methyl-2-oxopentanoate + CO2 + NADH. Its pathway is amino-acid biosynthesis; L-leucine biosynthesis; L-leucine from 3-methyl-2-oxobutanoate: step 3/4. In terms of biological role, catalyzes the oxidation of 3-carboxy-2-hydroxy-4-methylpentanoate (3-isopropylmalate) to 3-carboxy-4-methyl-2-oxopentanoate. The product decarboxylates to 4-methyl-2 oxopentanoate. The chain is 3-isopropylmalate dehydrogenase from Bordetella pertussis (strain Tohama I / ATCC BAA-589 / NCTC 13251).